Reading from the N-terminus, the 247-residue chain is tRNA (guanine-N(1)-)-methyltransferase (247 aa).

S-adenosyl-L-methionine is bound by residues Gly-115 and 134–139 (IGDFVL).

The protein belongs to the RNA methyltransferase TrmD family. In terms of assembly, homodimer.

It is found in the cytoplasm. It catalyses the reaction guanosine(37) in tRNA + S-adenosyl-L-methionine = N(1)-methylguanosine(37) in tRNA + S-adenosyl-L-homocysteine + H(+). Functionally, specifically methylates guanosine-37 in various tRNAs. The polypeptide is tRNA (guanine-N(1)-)-methyltransferase (Anaeromyxobacter dehalogenans (strain 2CP-C)).